The sequence spans 451 residues: Putative gluconeogenesis factor (451 aa).

Belongs to the gluconeogenesis factor family.

The protein resides in the cytoplasm. Its function is as follows. Required for morphogenesis under gluconeogenic growth conditions. The polypeptide is Putative gluconeogenesis factor (Clostridium acetobutylicum (strain ATCC 824 / DSM 792 / JCM 1419 / IAM 19013 / LMG 5710 / NBRC 13948 / NRRL B-527 / VKM B-1787 / 2291 / W)).